Consider the following 388-residue polypeptide: Splicing factor 3B subunit 4 (388 aa).

RRM domains lie at 13-91 (ATIY…KASA) and 100-179 (ANIF…YAFK). The tract at residues 244 to 388 (QPPPLMGMAQ…GMIPPPPPPS (145 aa)) is disordered. Pro residues-rich tracts occupy residues 261–325 (PPVP…PSRF), 333–355 (MPPP…PPRY), and 362–388 (MYPP…PPPS).

The protein belongs to the SF3B4 family.

The protein resides in the nucleus. Functionally, subunit of the splicing factor SF3B required for 'A' complex assembly formed by the stable binding of U2 snRNP to the branchpoint sequence (BPS) in pre-mRNA. Sequence independent binding of SF3A/SF3B complex upstream of the branch site is essential, it may anchor U2 snRNP to the pre-mRNA. May also be involved in the assembly of the 'E' complex. SF3B4 has been found in complex 'B' and 'C' as well. Belongs also to the minor U12-dependent spliceosome, which is involved in the splicing of rare class of nuclear pre-mRNA intron. This is Splicing factor 3B subunit 4 (sap-49) from Caenorhabditis elegans.